Consider the following 155-residue polypeptide: Transcriptional repressor NrdR (155 aa).

The interval 1–22 (MRCPFCGHDETQVKDSRPSEDG) is disordered. A zinc finger lies at 3–34 (CPFCGHDETQVKDSRPSEDGAAIRRRRLCPQC). A compositionally biased stretch (basic and acidic residues) spans 7–22 (GHDETQVKDSRPSEDG). The ATP-cone domain maps to 49 to 139 (ITILKRSGRR…VYRDFRETQD (91 aa)).

The protein belongs to the NrdR family. Zn(2+) is required as a cofactor.

In terms of biological role, negatively regulates transcription of bacterial ribonucleotide reductase nrd genes and operons by binding to NrdR-boxes. The protein is Transcriptional repressor NrdR of Phenylobacterium zucineum (strain HLK1).